We begin with the raw amino-acid sequence, 140 residues long: Putative pre-16S rRNA nuclease (140 aa).

It belongs to the YqgF nuclease family.

Its subcellular location is the cytoplasm. Functionally, could be a nuclease involved in processing of the 5'-end of pre-16S rRNA. The chain is Putative pre-16S rRNA nuclease from Pasteurella multocida (strain Pm70).